We begin with the raw amino-acid sequence, 70 residues long: Conotoxin ArMKLT2-0111 (70 aa).

The first 22 residues, 1–22 (MKLTCVLIIAVLFLTACQLTTG), serve as a signal peptide directing secretion. A propeptide spanning residues 23–40 (EQKDHALRSTDKNSKLTR) is cleaved from the precursor. Gln41 bears the Pyrrolidone carboxylic acid mark. Intrachain disulfides connect Cys42/Cys56, Cys49/Cys60, and Cys55/Cys67.

Belongs to the conotoxin O1 superfamily. In terms of tissue distribution, expressed by the venom duct.

Its subcellular location is the secreted. The sequence is that of Conotoxin ArMKLT2-0111 from Conus arenatus (Sand-dusted cone).